The following is a 142-amino-acid chain: Small ribosomal subunit protein bS18c (142 aa).

A disordered region spans residues 1–21 (MDRITGPFRKSKKSFRKPLPP).

Belongs to the bacterial ribosomal protein bS18 family. Part of the 30S ribosomal subunit.

Its subcellular location is the plastid. This is Small ribosomal subunit protein bS18c from Cuscuta gronovii (Common dodder).